Consider the following 1885-residue polypeptide: Chitin synthase 5 (1885 aa).

The Myosin motor domain maps to 1–789 (MATRGNVPAH…SIALTGSQAA (789 aa)). 99–106 (GESGSGKT) lines the ATP pocket. Residues N219 and N429 are each glycosylated (N-linked (GlcNAc...) asparagine). The interval 601–649 (KPLRMPSVSRKKHDQLRRMASRRADRSPAPQEEEPLPGTEEAKVRRTKP) is disordered. Basic residues predominate over residues 609 to 621 (SRKKHDQLRRMAS). Positions 666 to 690 (LDNITKSLTAPNVNNYFVFCLKPND) are actin-binding. Residue N668 is glycosylated (N-linked (GlcNAc...) asparagine). The tract at residues 794–817 (GDIGSPSRPDTPGHNPFSDSKARL) is disordered. The next 2 helical transmembrane spans lie at 894–914 (WLAI…KWIG) and 929–949 (FAIN…IIVF). The region spanning 957–1016 (QNVYSAAELSAHDGKGKHSAYVAIRGQVFDLGAFMPNHYPKIIPQSSLKKYAGVDATGLF) is the Cytochrome b5 heme-binding domain. N-linked (GlcNAc...) asparagine glycans are attached at residues N1043 and N1068. Residues 1205 to 1225 (ILLAVSILLCSVIGFKFFAAL) form a helical membrane-spanning segment. Residues N1462 and N1568 are each glycosylated (N-linked (GlcNAc...) asparagine). 3 helical membrane-spanning segments follow: residues 1599–1619 (LLST…IVLL), 1626–1646 (VPLT…IIFI), and 1653–1673 (MIGW…GLPL). 2 N-linked (GlcNAc...) asparagine glycosylation sites follow: N1759 and N1790. Positions 1827-1882 (LPTDDMLLNEIRDILRTADLMTVTKKGIKQELERRFNVNLDMKRAYIGSATEAILS) constitute a DEK-C domain.

In the N-terminal section; belongs to the TRAFAC class myosin-kinesin ATPase superfamily. Myosin family. This sequence in the C-terminal section; belongs to the chitin synthase family. Class V subfamily. Post-translationally, maximal activity requires trypsin activation, suggesting a zymogenic nature.

It localises to the cell membrane. The protein localises to the membrane. The catalysed reaction is [(1-&gt;4)-N-acetyl-beta-D-glucosaminyl](n) + UDP-N-acetyl-alpha-D-glucosamine = [(1-&gt;4)-N-acetyl-beta-D-glucosaminyl](n+1) + UDP + H(+). Functionally, polymerizes chitin, a structural polymer of the cell wall and septum, by transferring the sugar moiety of UDP-GlcNAc to the non-reducing end of the growing chitin polymer. CHS5 is required for the sustained growth at 37 degrees Celsius and is of critical importance for virulence. Especially important at infection temperatures for maintaining the cell wall integrity of developing yeast buds, elongating tips of hyphae, and random sites of expansion in sclerotic forms. This Exophiala dermatitidis (Black yeast-like fungus) protein is Chitin synthase 5.